The primary structure comprises 218 residues: GTP cyclohydrolase 1 (218 aa).

Residues cysteine 109, histidine 112, and cysteine 180 each coordinate Zn(2+).

It belongs to the GTP cyclohydrolase I family. Toroid-shaped homodecamer, composed of two pentamers of five dimers.

It catalyses the reaction GTP + H2O = 7,8-dihydroneopterin 3'-triphosphate + formate + H(+). It functions in the pathway cofactor biosynthesis; 7,8-dihydroneopterin triphosphate biosynthesis; 7,8-dihydroneopterin triphosphate from GTP: step 1/1. The sequence is that of GTP cyclohydrolase 1 from Aeromonas hydrophila subsp. hydrophila (strain ATCC 7966 / DSM 30187 / BCRC 13018 / CCUG 14551 / JCM 1027 / KCTC 2358 / NCIMB 9240 / NCTC 8049).